The chain runs to 39 residues: MQVNPNPNKVPVELNRTSLYLGLLLVFVMGILFSSYFFN.

The helical transmembrane segment at 18–38 threads the bilayer; that stretch reads SLYLGLLLVFVMGILFSSYFF.

The protein belongs to the PsbL family. PSII is composed of 1 copy each of membrane proteins PsbA, PsbB, PsbC, PsbD, PsbE, PsbF, PsbH, PsbI, PsbJ, PsbK, PsbL, PsbM, PsbT, PsbX, PsbY, Psb30/Ycf12, peripheral proteins PsbO, CyanoQ (PsbQ), PsbU, PsbV and a large number of cofactors. It forms dimeric complexes.

It localises to the cellular thylakoid membrane. One of the components of the core complex of photosystem II (PSII). PSII is a light-driven water:plastoquinone oxidoreductase that uses light energy to abstract electrons from H(2)O, generating O(2) and a proton gradient subsequently used for ATP formation. It consists of a core antenna complex that captures photons, and an electron transfer chain that converts photonic excitation into a charge separation. This subunit is found at the monomer-monomer interface and is required for correct PSII assembly and/or dimerization. The polypeptide is Photosystem II reaction center protein L (Prochlorococcus marinus (strain NATL2A)).